We begin with the raw amino-acid sequence, 215 residues long: 3-demethoxyubiquinol 3-hydroxylase (215 aa).

The Fe cation site is built by E64, E94, H97, E146, E178, and H181.

The protein belongs to the COQ7 family. Fe cation serves as cofactor.

The protein localises to the cell membrane. The catalysed reaction is a 5-methoxy-2-methyl-3-(all-trans-polyprenyl)benzene-1,4-diol + AH2 + O2 = a 3-demethylubiquinol + A + H2O. The protein operates within cofactor biosynthesis; ubiquinone biosynthesis. Its function is as follows. Catalyzes the hydroxylation of 2-nonaprenyl-3-methyl-6-methoxy-1,4-benzoquinol during ubiquinone biosynthesis. In Pseudomonas fluorescens (strain Pf0-1), this protein is 3-demethoxyubiquinol 3-hydroxylase.